We begin with the raw amino-acid sequence, 361 residues long: Phospho-N-acetylmuramoyl-pentapeptide-transferase (361 aa).

The next 10 membrane-spanning stretches (helical) occupy residues Tyr21 to Gly41, Met74 to Ala94, Tyr97 to Tyr117, Trp132 to Gly152, Val168 to Gly188, Gly199 to Thr219, Leu239 to Tyr259, Phe264 to Val284, Phe288 to Val308, and Val339 to Lys359.

The protein belongs to the glycosyltransferase 4 family. MraY subfamily. It depends on Mg(2+) as a cofactor.

The protein localises to the cell inner membrane. The catalysed reaction is UDP-N-acetyl-alpha-D-muramoyl-L-alanyl-gamma-D-glutamyl-meso-2,6-diaminopimeloyl-D-alanyl-D-alanine + di-trans,octa-cis-undecaprenyl phosphate = di-trans,octa-cis-undecaprenyl diphospho-N-acetyl-alpha-D-muramoyl-L-alanyl-D-glutamyl-meso-2,6-diaminopimeloyl-D-alanyl-D-alanine + UMP. It functions in the pathway cell wall biogenesis; peptidoglycan biosynthesis. In terms of biological role, catalyzes the initial step of the lipid cycle reactions in the biosynthesis of the cell wall peptidoglycan: transfers peptidoglycan precursor phospho-MurNAc-pentapeptide from UDP-MurNAc-pentapeptide onto the lipid carrier undecaprenyl phosphate, yielding undecaprenyl-pyrophosphoryl-MurNAc-pentapeptide, known as lipid I. This is Phospho-N-acetylmuramoyl-pentapeptide-transferase from Histophilus somni (strain 129Pt) (Haemophilus somnus).